The following is a 428-amino-acid chain: 3-phosphoshikimate 1-carboxyvinyltransferase (428 aa).

Residues Lys23, Ser24, and Arg28 each coordinate 3-phosphoshikimate. Lys23 lines the phosphoenolpyruvate pocket. The phosphoenolpyruvate site is built by Gly97 and Arg125. Residues Ser170, Ser171, Gln172, Ser198, Asp314, Asn337, and Lys341 each coordinate 3-phosphoshikimate. Gln172 is a binding site for phosphoenolpyruvate. The active-site Proton acceptor is Asp314. 3 residues coordinate phosphoenolpyruvate: Arg345, Arg387, and Lys412.

Belongs to the EPSP synthase family. Monomer.

It localises to the cytoplasm. It catalyses the reaction 3-phosphoshikimate + phosphoenolpyruvate = 5-O-(1-carboxyvinyl)-3-phosphoshikimate + phosphate. It participates in metabolic intermediate biosynthesis; chorismate biosynthesis; chorismate from D-erythrose 4-phosphate and phosphoenolpyruvate: step 6/7. Functionally, catalyzes the transfer of the enolpyruvyl moiety of phosphoenolpyruvate (PEP) to the 5-hydroxyl of shikimate-3-phosphate (S3P) to produce enolpyruvyl shikimate-3-phosphate and inorganic phosphate. The polypeptide is 3-phosphoshikimate 1-carboxyvinyltransferase (Hamiltonella defensa subsp. Acyrthosiphon pisum (strain 5AT)).